We begin with the raw amino-acid sequence, 270 residues long: Phosphatidylglycerol--prolipoprotein diacylglyceryl transferase (270 aa).

The next 4 membrane-spanning stretches (helical) occupy residues 19 to 39, 56 to 76, 92 to 112, and 116 to 136; these read FPVYWYGIIIGTGVLLGLWLA, LVLIAVPIAILFARMYYVIFE, QGGLAIHGGLIGAVITGILFA, and GVSFWKLADIAAPSILLGQAI. Arginine 138 is a binding site for a 1,2-diacyl-sn-glycero-3-phospho-(1'-sn-glycerol). A run of 3 helical transmembrane segments spans residues 178–198, 206–226, and 236–256; these read HPTFLYESLWNFAGVILLLAL, GELFFTYLIWYSIGRFFVEGL, and LRIAQVMSIGLVVISIIFIIV.

The protein belongs to the Lgt family.

Its subcellular location is the cell membrane. It catalyses the reaction L-cysteinyl-[prolipoprotein] + a 1,2-diacyl-sn-glycero-3-phospho-(1'-sn-glycerol) = an S-1,2-diacyl-sn-glyceryl-L-cysteinyl-[prolipoprotein] + sn-glycerol 1-phosphate + H(+). It functions in the pathway protein modification; lipoprotein biosynthesis (diacylglyceryl transfer). In terms of biological role, catalyzes the transfer of the diacylglyceryl group from phosphatidylglycerol to the sulfhydryl group of the N-terminal cysteine of a prolipoprotein, the first step in the formation of mature lipoproteins. The polypeptide is Phosphatidylglycerol--prolipoprotein diacylglyceryl transferase (Bacillus thuringiensis subsp. konkukian (strain 97-27)).